The chain runs to 614 residues: Kelch-like protein 40 (614 aa).

The region spanning 33-100 (IDCVLKIQGK…IYTSEIEITE (68 aa)) is the BTB domain. The BACK domain maps to 135–237 (CLAIFRLGLL…PQDYIKNKVE (103 aa)). Kelch repeat units follow at residues 353-405 (QLFV…ESDN), 406-455 (SIYL…SHDN), 456-503 (LVYV…VHKG), 505-550 (ILIA…SMNG), and 552-606 (LYAI…AARL).

It belongs to the KLHL40 family. As to quaternary structure, component of the BCR(KLHL40) E3 ubiquitin ligase complex.

It localises to the cytoplasm. Its subcellular location is the myofibril. It is found in the sarcomere. The protein localises to the a band. The protein resides in the i band. Substrate-specific adapter of a BCR (BTB-CUL3-RBX1) E3 ubiquitin ligase complex that acts as a key regulator of skeletal muscle development. This Xenopus tropicalis (Western clawed frog) protein is Kelch-like protein 40 (klhl40).